A 480-amino-acid chain; its full sequence is UDP-glucose 6-dehydrogenase 5 (480 aa).

Residues 8-13 (GAGYVG), Asp33, Arg38, 86-90 (VNTPT), 127-128 (ST), and Glu161 each bind NAD(+). Substrate is bound by residues 157–161 (EFLAE), 216–223 (KLAANAFL), and 256–269 (RIGP…VGFG). The active-site Nucleophile is Cys272. 272 to 275 (CFQK) is an NAD(+) binding site. Substrate is bound at residue 334 to 335 (FK). Arg342 lines the NAD(+) pocket. A Phosphoserine modification is found at Ser393. Substrate is bound at residue Arg447.

The protein belongs to the UDP-glucose/GDP-mannose dehydrogenase family.

The enzyme catalyses UDP-alpha-D-glucose + 2 NAD(+) + H2O = UDP-alpha-D-glucuronate + 2 NADH + 3 H(+). It functions in the pathway nucleotide-sugar biosynthesis; UDP-alpha-D-glucuronate biosynthesis; UDP-alpha-D-glucuronate from UDP-alpha-D-glucose: step 1/1. In terms of biological role, involved in the biosynthesis of UDP-glucuronic acid (UDP-GlcA), providing nucleotide sugars for cell-wall polymers. The protein is UDP-glucose 6-dehydrogenase 5 (UGD5) of Oryza sativa subsp. japonica (Rice).